The chain runs to 522 residues: Lysine--tRNA ligase (522 aa).

The short motif at 44 to 52 is the 'HIGH' region element; sequence PSGLPHIGT. The short motif at 290–294 is the 'KMSKS' region element; that stretch reads KISKS. Residue Lys-293 coordinates ATP.

It belongs to the class-I aminoacyl-tRNA synthetase family.

The protein localises to the cytoplasm. It catalyses the reaction tRNA(Lys) + L-lysine + ATP = L-lysyl-tRNA(Lys) + AMP + diphosphate. The polypeptide is Lysine--tRNA ligase (Rickettsia rickettsii (strain Iowa)).